A 589-amino-acid chain; its full sequence is Malto-oligosyltrehalose trehalohydrolase (589 aa).

Substrate is bound at residue 256 to 261 (GFDAVH). Aspartate 258 serves as the catalytic Nucleophile. Glutamate 295 functions as the Proton donor in the catalytic mechanism. Substrate-binding positions include 320-324 (DDFHT) and 390-395 (HDQIGN).

The protein belongs to the glycosyl hydrolase 13 family.

Its subcellular location is the cytoplasm. It catalyses the reaction hydrolysis of (1-&gt;4)-alpha-D-glucosidic linkage in 4-alpha-D-[(1-&gt;4)-alpha-D-glucanosyl]n trehalose to yield trehalose and (1-&gt;4)-alpha-D-glucan.. The protein operates within glycan biosynthesis; trehalose biosynthesis. This is Malto-oligosyltrehalose trehalohydrolase (treZ) from Brevibacterium helvolum.